A 362-amino-acid polypeptide reads, in one-letter code: MRDETPEQPAPLRFGYTTGSCATATSLAAARLLLTGHADDAVEIVLPKGQRVMMRLEFCRTTADGAEAGTIKDAGDDPDVTHGALIFARVARAAAPGVRFHAGPGVGTVTRAGLTLPVGEPAINPVPRQMMTTHLEALAAEHGYAGGFDVTIGVEGGEALALKTMNPRLGIVGGLSILGTTGIVRPFSCSAYIASIHQGIDVARANGITHIAACTGNASEDAMRAHYQLPDMALIEMGDFAGAVLKHLRRAPVARLSMCGGFGKLSKLAAGHLDLHSRHSSIDLPLLAQWAAEAGASDALQAAMRAANTSQEALKLAQADAVPLGDLVCAHALQVARDIVPPSVAVEMFAIDRQGRFVGAAR.

It belongs to the CbiD family.

The enzyme catalyses Co-precorrin-5B + S-adenosyl-L-methionine = Co-precorrin-6A + S-adenosyl-L-homocysteine. Its pathway is cofactor biosynthesis; adenosylcobalamin biosynthesis; cob(II)yrinate a,c-diamide from sirohydrochlorin (anaerobic route): step 6/10. In terms of biological role, catalyzes the methylation of C-1 in cobalt-precorrin-5B to form cobalt-precorrin-6A. The chain is Cobalt-precorrin-5B C(1)-methyltransferase from Burkholderia cenocepacia (strain ATCC BAA-245 / DSM 16553 / LMG 16656 / NCTC 13227 / J2315 / CF5610) (Burkholderia cepacia (strain J2315)).